The sequence spans 385 residues: Succinate--CoA ligase [ADP-forming] subunit beta (385 aa).

Residues 9–244 (KEILRKYGVP…QDEEDPLETR (236 aa)) form the ATP-grasp domain. Residues Lys46, 53–55 (GRG), Glu99, Cys102, and Glu107 each bind ATP. Mg(2+) is bound by residues Asn199 and Asp213. Substrate is bound by residues Asn264 and 321 to 323 (GIM).

This sequence belongs to the succinate/malate CoA ligase beta subunit family. In terms of assembly, heterotetramer of two alpha and two beta subunits. It depends on Mg(2+) as a cofactor.

The catalysed reaction is succinate + ATP + CoA = succinyl-CoA + ADP + phosphate. It catalyses the reaction GTP + succinate + CoA = succinyl-CoA + GDP + phosphate. Its pathway is carbohydrate metabolism; tricarboxylic acid cycle; succinate from succinyl-CoA (ligase route): step 1/1. Succinyl-CoA synthetase functions in the citric acid cycle (TCA), coupling the hydrolysis of succinyl-CoA to the synthesis of either ATP or GTP and thus represents the only step of substrate-level phosphorylation in the TCA. The beta subunit provides nucleotide specificity of the enzyme and binds the substrate succinate, while the binding sites for coenzyme A and phosphate are found in the alpha subunit. The polypeptide is Succinate--CoA ligase [ADP-forming] subunit beta (Rickettsia bellii (strain OSU 85-389)).